The sequence spans 87 residues: Probable Fe(2+)-trafficking protein (87 aa).

Belongs to the Fe(2+)-trafficking protein family.

Functionally, could be a mediator in iron transactions between iron acquisition and iron-requiring processes, such as synthesis and/or repair of Fe-S clusters in biosynthetic enzymes. The chain is Probable Fe(2+)-trafficking protein from Francisella tularensis subsp. novicida (strain U112).